Consider the following 2083-residue polypeptide: MGSIQQDDVHNQIDHCNQSDDLPAARLNCNDVELFEVAGLACDETSSPTGMRDEMVLLSWLIALLRTREGGQIRYEWAYRYPEEEPVPRCLAMNEVVAGLQSSVKETAAAVSRHISADVSSPPAPASLLLSTSSLSQTSDEAKDEGLLHLEIAFENGLCKIRPTWHSENMLPFTVTRYARTLIDTVRLCISNCDAAIQDCLRPTAYDLDEIWRWNHNLPPTYNFCMHEIISDQAQKFPDKEAIASWDGSLTYRQIDQYSSFVARSLIGMGVGLHDVLPVCFEKSRWTIVAVLAVMKAGATFVLMDPTLPLARLQNMAQQVGAKMMVSSRGQYNLATEIIPNANVLVVEENTFSSLSAEQNGEPLPTVPSSALMYMIFTSGSTGTPKGVKISHETYTSSAIPRANAVGYTEDSRVLDFASYAFDVSIDSMLLTLGNGGCLCIPSDEDRLNDINGVIRRMKVNYAGLTPSVARILDADVISSLSGLGLGGEAVSARDVNLWGQDTRIIIGYGPCECTIGCTVNSSAATGRDYISIGPGNGAVIWIVDPNDHESLVPLGAVGELLVEGPIVGQGYLNDPEKTAAAFIEDPSWLVAGHEGYPGRRGRLYKTGDLGRYDPDGSGGIVFVGRKDTQVKLRGQRVELGEIESQLRARLPSETTVIAEVIVPQGSGGQPTLVAFVAAQTTKGHDHTGLEAAELPDELRRALSEADAELAKVLPRYMVPTAYIPVNHIPTLISGKTDRKRLRQFGATVDLRQLDQDATNTAARELSDLERRLRQAWSQTLKLQACSIRLQDNFFALGGDSLTAMKLVSVCRSQGLDLSVTSMFSNPTLSAMASVVRICDVDVQRTVPAFSMITSDMNSACVEAAEPCGVGPADIEDIYPCTPTQESLFTFSLKSVKPYVAQRVLCIPSHIDLNAWRKAWEDVVAALPILRTRVAQLQEPGLQQVVLKNSISWTQASDLAEYLENDRTQKMNLGESLARYAIVEDSADGKRYMVWTIHHVLYDGWSEPIILKQVSDALQGQPVEVKAQMRDFVRFVRDSDDAAVQEFWRRELKGAVGPQFPRLPSRDFMPTPDALVERQVSLDTSSGSPFTMATLIRGAWALVASQYTGSDDIVFGETLTGRDIPLPGVESIVGPLIATVPIRVRILRGSTVESYLQAVQQSVLARTPYQHLGMQNIRKVSQDAQHACETGTGLVIQPEPEYVGSELGVERGDVVLEALHFNPYPLMLACGIRKGGFRVCASFDSSLIETRQMERMLAQLETACWQLSQGLSRKVDEISCLPEAELNQIWQWNRSPPLSLDETTSRLRANASTKPGSSYPPAVVPWVCSPRNSSLLSPIGCVGELWLEGALLSGDTVDSPAWLVAGSSTCAGRTGKVQATGDMVQLREDGSLVFVGRKENVVPVQGHAVDITEIERHLAEHLPPTIRAAATVVRSSSDQELVMFIEQPAAEEACIELLSEKREIVCDAPDKAFQTTICATIPGSLAAVLKKLDKYMRDSLPSYMAPSAYIVVEKLPNTMDDIDHNLLNQIASQVTPQILNELRDGLSNAWTKATAPNHLSASESILRSAWAKVLRVDPEQIDVDDNFFRRGGDSVLAMKLVSSLRAQGYSLSVADIFRHMRLSDAARVMKVDERSTEKINSYQPFSMLRLPDVQQFLANIVRPQLGDQHWPIRDVLPVTDSQDMDIRATIQPPRTSIQYTMLYFDNSVDRERLFRSCSDLVKTHEILRTVFISHESSFLQVVLNELEIPVRAHKTDKQLDQYVASLFREDIESNFQLGCPFLRLFYVEGNNGESCLVIGLSHAQYDGVSLPRLLQDLDALYTGTQLATFSPFSLYMAQTSEEAIQNKAAAYWRNLLSSSSLSTLDGPSSDPTDKAIFHTRPVNIHPLKEITTANLLTAAWAMVLARRLQTPDVTFGSVTSGRTLDIPNAENFMGPCYQLTPVRVPFHPDWTASDLLNFVQTQSAESAAHDFLGFEKIAKLAGWASGRQGFDSIVHHQDWEDFDMMPFGGGSCRVDIANPHGDAAYPVKAVSFVKEGEIHVGVVCSERDVMFVDEVLGELAAAVVELAGQSTEVLLDSKLFSGQ.

The adenylation 1 stretch occupies residues 251–650 (TYRQIDQYSS…GEIESQLRAR (400 aa)). In terms of domain architecture, Carrier 1 spans 764-840 (RELSDLERRL…AMASVVRICD (77 aa)). S801 is modified (O-(pantetheine 4'-phosphoryl)serine). A condensation 1 region spans residues 876–1146 (EDIYPCTPTQ…IATVPIRVRI (271 aa)). The segment at 1336-1421 (LSPIGCVGEL…TEIERHLAEH (86 aa)) is adenylation 2. The region spanning 1557–1633 (NHLSASESIL…DAARVMKVDE (77 aa)) is the Carrier 2 domain. S1594 carries the post-translational modification O-(pantetheine 4'-phosphoryl)serine. A condensation 2 region spans residues 1674-1946 (DVLPVTDSQD…YQLTPVRVPF (273 aa)).

The protein belongs to the NRP synthetase family.

Its pathway is siderophore biosynthesis. Nonribosomal peptide synthetase; part of the siderophore biosynthetic pathway. Aspergillus fumigatus produces four types of siderophores, low-molecular-mass iron chelators, including excreted fusarinine C (FsC) and triacetylfusarinine C (TAFC) for iron uptake; and intacellular ferricrocin (FC) for hyphal and hydroxyferricrocin (HFC) for conidial iron distribution and storage. TAFC consists of three N(2)-acetyl-N(5)-anhydromevalonyl-N(5)-hydroxyornithine residues cyclically linked by ester bonds; FC is a cyclic hexapeptide with the structure Gly-Ser-Gly-(N(5)-acetyl-N(5)-hydroxyornithine)x3. The biosynthesis of all four siderophores depends on the hydroxylation of ornithine, catalyzed by the monooxygenase sidA. Subsequently, the pathways for biosynthesis of extra- and intracellular siderophores split. For biosynthesis of extracellular siderophores, the transacylase sidF transfers anhydromevalonyl to N(5)-hydroxyornithine. The required anhydromevalonyl-CoA moiety is derived from mevalonate by CoA ligation and dehydration catalyzed by sidI and sidH respectively. The acetylation of N(5)-hydroxyornithine for FC biosynthesis involves the constitutively expressed sidL. FC is hydroxylated to HFC by an as yet uncharacterized enzyme during conidiation. Assembly of fusarinine C (FsC) and FC is catalyzed by two different nonribosomal peptide synthetases (NRPS), sidD and sidC respectively. Subsequently, sidG catalyzes N2-acetylation of FsC for forming TAFC. Both extra- and intracellular siderophores are crucial for growth during iron limitation and virulence. The sequence is that of Nonribosomal peptide synthetase sidD from Aspergillus fumigatus (strain ATCC MYA-4609 / CBS 101355 / FGSC A1100 / Af293) (Neosartorya fumigata).